Here is a 69-residue protein sequence, read N- to C-terminus: Sodium channel toxin (69 aa).

Residues 2–66 (KNDYPVDTAK…SPTKTSGRCN (65 aa)) form the LCN-type CS-alpha/beta domain. 4 disulfide bridges follow: C14–C65, C18–C41, C27–C48, and C31–C50.

This sequence belongs to the long (4 C-C) scorpion toxin superfamily. Sodium channel inhibitor family. In terms of tissue distribution, expressed by the venom gland.

The protein localises to the secreted. Inhibits voltage-gated sodium channels (Nav). This is Sodium channel toxin from Tityus metuendus (Scorpion).